A 241-amino-acid chain; its full sequence is Methylthioribulose-1-phosphate dehydratase (241 aa).

The segment covering 1-12 (MSQEITQKDNND) has biased composition (basic and acidic residues). The interval 1 to 22 (MSQEITQKDNNDHLVQSSDPDH) is disordered. Cys101 contacts substrate. His118 and His120 together coordinate Zn(2+). The active-site Proton donor/acceptor is the Glu147. His203 serves as a coordination point for Zn(2+).

This sequence belongs to the aldolase class II family. MtnB subfamily. The cofactor is Zn(2+).

Its subcellular location is the cytoplasm. It carries out the reaction 5-(methylsulfanyl)-D-ribulose 1-phosphate = 5-methylsulfanyl-2,3-dioxopentyl phosphate + H2O. The protein operates within amino-acid biosynthesis; L-methionine biosynthesis via salvage pathway; L-methionine from S-methyl-5-thio-alpha-D-ribose 1-phosphate: step 2/6. Functionally, catalyzes the dehydration of methylthioribulose-1-phosphate (MTRu-1-P) into 2,3-diketo-5-methylthiopentyl-1-phosphate (DK-MTP-1-P). The chain is Methylthioribulose-1-phosphate dehydratase from Aspergillus terreus (strain NIH 2624 / FGSC A1156).